The chain runs to 453 residues: Putative amino acid/polyamine transporter MPH_07630_2 (453 aa).

A run of 3 helical transmembrane segments spans residues 2-21 (IGFS…VLVV), 30-50 (VMIW…YSMA), and 81-101 (VCGW…NFIA). An N-linked (GlcNAc...) asparagine glycan is attached at Asn-110. 2 helical membrane passes run 121 to 141 (WHAV…SIFL) and 151 to 171 (AILI…LATN). Residue Asn-186 is glycosylated (N-linked (GlcNAc...) asparagine). The next 2 helical transmembrane spans lie at 193–213 (AYAA…YDAP) and 231–251 (IVMS…SLCF). N-linked (GlcNAc...) asparagine glycosylation occurs at Asn-274. 4 helical membrane-spanning segments follow: residues 277-297 (GSVA…LVCA), 330-350 (LGVP…FNSI), 358-378 (FNTV…IPLL), and 403-423 (GLLA…TFNF). N-linked (GlcNAc...) asparagine glycosylation is present at Asn-435.

Belongs to the amino acid-polyamine-organocation (APC) superfamily.

Its subcellular location is the membrane. This is Putative amino acid/polyamine transporter MPH_07630_2 from Macrophomina phaseolina (strain MS6) (Charcoal rot fungus).